The chain runs to 342 residues: AA9 family lytic polysaccharide monooxygenase H (342 aa).

The signal sequence occupies residues Met-1 to Ala-19. Residues His-20 and His-106 each coordinate Cu(2+). 2 disulfide bridges follow: Cys-75-Cys-195 and Cys-117-Cys-121. 2 residues coordinate O2: His-181 and Gln-190. Tyr-192 serves as a coordination point for Cu(2+). Residues Ala-263 to Gln-308 form a disordered region. The segment covering Asn-272–Gly-305 has biased composition (low complexity). In terms of domain architecture, CBM1 spans Asp-306 to Leu-342.

The protein belongs to the polysaccharide monooxygenase AA9 family. Requires Cu(2+) as cofactor.

It is found in the secreted. It carries out the reaction [(1-&gt;4)-beta-D-glucosyl]n+m + reduced acceptor + O2 = 4-dehydro-beta-D-glucosyl-[(1-&gt;4)-beta-D-glucosyl]n-1 + [(1-&gt;4)-beta-D-glucosyl]m + acceptor + H2O.. Its activity is regulated as follows. The presence of lignin presents a significant source of antioxidants, which probably increase the activity by trapping liberated oxidized fragments. Its function is as follows. Lytic polysaccharide monooxygenase (LPMO) that depolymerizes crystalline and amorphous polysaccharides via the oxidation of scissile alpha- or beta-(1-4)-glycosidic bonds, yielding C1 or C4 oxidation products. Catalysis by LPMOs requires the reduction of the active-site copper from Cu(II) to Cu(I) by a reducing agent and H(2)O(2) or O(2) as a cosubstrate. Hydrolyzes weakly barley beta-glucan, carboxymethyl cellulose, lichenan, wheat arabinoxylan and birchwood xylan. Stimulates the hydrolysis of lignocellulosic substrates (such as hydrothermal pretreated wheat straw or steam-pretreated spruce), when combined with other cellulolytic enzymes. The sequence is that of AA9 family lytic polysaccharide monooxygenase H from Thermothelomyces thermophilus (strain ATCC 42464 / BCRC 31852 / DSM 1799) (Sporotrichum thermophile).